We begin with the raw amino-acid sequence, 68 residues long: Peptide Hp1412 (68 aa).

The first 23 residues, 1–23 (MKTHFAIFLITLFLFQMFSQSDA), serve as a signal peptide directing secretion. Cys36 carries the cysteine amide modification. Positions 40–68 (GLSDLYDLDEMFDGEISQADIDFLKELMR) are excised as a propeptide.

The protein belongs to the non-disulfide-bridged peptide (NDBP) superfamily. Short antimicrobial peptide (group 4) family. As to expression, expressed by the venom gland.

It localises to the secreted. The protein localises to the target cell membrane. Its function is as follows. Amphipathic peptide with antimicrobial activity. The protein is Peptide Hp1412 of Heterometrus petersii (Asian forest scorpion).